The following is a 482-amino-acid chain: MGKRQDWSVTACIFLFLSLASQIHCRSHIPFPSPKRGVSSSGDTSHFNVIQRESVPSPKDKDLIQQLPGQPSDVTFKQYGGYVAVNKPAGRFLYYYFVETIKPGNTTPLVIWFNGGPGCSSLGGAFKELGPFRVHSDGKTLFRNPYSWNNEANVLFLETPVGTGFSYSNSPINGKQGDKATAEDNYMFLVNWLERFPEYKGRDIYIAGQSYAGHYVPQLAQIILHRNNQTLINLRGILIGNPSLNREIQDDFGYKFMFSHGLISQQQMDNYNKFCTDSDLYDWDKCHLASQKIEAQKTHLDIYNIYAPLCLNSTLSSEPKKCTTIMKADPCSGNYLKAYLNIKEVQEAIHANTTKIPYEWTSCNTKLLWEWNEKDRYVSLTPILQELMGKGVRVMLYNGDVDLVIPFTSTLAVVKTMNLTVVKEWRPWFTGGHVGGFTEDYKGNLTFVTVKGAGHSVPTDQPIHALNIFTSFIRNTPLPQTA.

The signal sequence occupies residues Met-1–Cys-25. Cystine bridges form between Cys-119/Cys-363, Cys-275/Cys-286, and Cys-310/Cys-331. Ser-210 is a catalytic residue. Asn-228 carries an N-linked (GlcNAc...) asparagine glycan. 2 N-linked (GlcNAc...) asparagine glycosylation sites follow: Asn-312 and Asn-352. The active site involves Asp-402. N-linked (GlcNAc...) asparagine glycans are attached at residues Asn-418 and Asn-444. His-455 is a catalytic residue.

This sequence belongs to the peptidase S10 family. In terms of tissue distribution, expressed in seedlings, flowers and siliques.

It localises to the secreted. In terms of biological role, probable carboxypeptidase. The sequence is that of Serine carboxypeptidase-like 36 (SCPL36) from Arabidopsis thaliana (Mouse-ear cress).